We begin with the raw amino-acid sequence, 349 residues long: 4-hydroxy-3-methylbut-2-en-1-yl diphosphate synthase (flavodoxin) (349 aa).

4 residues coordinate [4Fe-4S] cluster: Cys-264, Cys-267, Cys-299, and Glu-306.

Belongs to the IspG family. It depends on [4Fe-4S] cluster as a cofactor.

It catalyses the reaction (2E)-4-hydroxy-3-methylbut-2-enyl diphosphate + oxidized [flavodoxin] + H2O + 2 H(+) = 2-C-methyl-D-erythritol 2,4-cyclic diphosphate + reduced [flavodoxin]. It functions in the pathway isoprenoid biosynthesis; isopentenyl diphosphate biosynthesis via DXP pathway; isopentenyl diphosphate from 1-deoxy-D-xylulose 5-phosphate: step 5/6. Functionally, converts 2C-methyl-D-erythritol 2,4-cyclodiphosphate (ME-2,4cPP) into 1-hydroxy-2-methyl-2-(E)-butenyl 4-diphosphate. In Clostridium acetobutylicum (strain ATCC 824 / DSM 792 / JCM 1419 / IAM 19013 / LMG 5710 / NBRC 13948 / NRRL B-527 / VKM B-1787 / 2291 / W), this protein is 4-hydroxy-3-methylbut-2-en-1-yl diphosphate synthase (flavodoxin).